The primary structure comprises 236 residues: Glycosylphosphatidylinositol anchor biosynthesis protein 11 (236 aa).

Helical transmembrane passes span T40–T60 and G65–I85. N-linked (GlcNAc...) asparagine glycosylation is present at N99. The next 4 membrane-spanning stretches (helical) occupy residues L107–I127, E139–Y159, I184–L204, and I215–F235.

The protein belongs to the PIGF family.

The protein localises to the endoplasmic reticulum membrane. The protein operates within glycolipid biosynthesis; glycosylphosphatidylinositol-anchor biosynthesis. Acts in the GPI biosynthetic pathway between GlcNAc-PI synthesis and GPI transfer to protein. This is Glycosylphosphatidylinositol anchor biosynthesis protein 11 (GPI11) from Debaryomyces hansenii (strain ATCC 36239 / CBS 767 / BCRC 21394 / JCM 1990 / NBRC 0083 / IGC 2968) (Yeast).